The sequence spans 542 residues: TOM1-like protein 7 (542 aa).

The 130-residue stretch at 29-158 (ATSELLRTPD…ELKRCGVKFP (130 aa)) folds into the VHS domain. Serine 161 bears the Phosphoserine mark. Residues 201 to 289 (EIESLSLSSL…VLARHDAIAS (89 aa)) form the GAT domain. Residues 303–340 (RETSSSLKTCGAAALESADSESSSSSSSSESETDEVED) are disordered. Low complexity predominate over residues 314–332 (AAALESADSESSSSSSSSE). A Phosphoserine modification is found at serine 521. A disordered region spans residues 522–542 (FPARATGTSGAATAATVDRQP). Residues 524–542 (ARATGTSGAATAATVDRQP) show a composition bias toward low complexity.

It belongs to the TOM1 family. As to expression, preferentially expressed in flowers.

It is found in the membrane. Might contribute to the loading of the ESCRT machinery. This Arabidopsis thaliana (Mouse-ear cress) protein is TOM1-like protein 7.